The following is a 315-amino-acid chain: Gamma-hemolysin component C (315 aa).

The first 29 residues, 1 to 29 (MLKNKILTTTLSVSLLAPLANPLLENAKA), serve as a signal peptide directing secretion.

It belongs to the aerolysin family. In terms of assembly, toxicity requires sequential binding and synergistic association of a class S and a class F component which form heterooligomeric complexes. HlgB (class F) associates with either hlgA thus forming an AB toxin or with hlgC thus forming a CB toxin.

The protein resides in the secreted. Toxin that seems to act by forming pores in the membrane of the cell. Has a hemolytic and a leucotoxic activity. In Staphylococcus aureus (strain NCTC 8325 / PS 47), this protein is Gamma-hemolysin component C (hlgC).